Consider the following 41-residue polypeptide: Cytochrome b559 subunit beta (41 aa).

Residues 16–32 form a helical membrane-spanning segment; that stretch reads WLAVHALAVPTVFFLGS. Position 20 (His-20) interacts with heme.

Belongs to the PsbE/PsbF family. As to quaternary structure, heterodimer of an alpha subunit and a beta subunit. PSII is composed of 1 copy each of membrane proteins PsbA, PsbB, PsbC, PsbD, PsbE, PsbF, PsbH, PsbI, PsbJ, PsbK, PsbL, PsbM, PsbT, PsbX, PsbY, PsbZ, Psb30/Ycf12, at least 3 peripheral proteins of the oxygen-evolving complex and a large number of cofactors. It forms dimeric complexes. The cofactor is heme b.

It localises to the plastid. It is found in the chloroplast thylakoid membrane. Functionally, this b-type cytochrome is tightly associated with the reaction center of photosystem II (PSII). PSII is a light-driven water:plastoquinone oxidoreductase that uses light energy to abstract electrons from H(2)O, generating O(2) and a proton gradient subsequently used for ATP formation. It consists of a core antenna complex that captures photons, and an electron transfer chain that converts photonic excitation into a charge separation. This is Cytochrome b559 subunit beta from Nephroselmis olivacea (Green alga).